The sequence spans 693 residues: Polyribonucleotide nucleotidyltransferase (693 aa).

Asp487 and Asp493 together coordinate Mg(2+). The KH domain maps to 554–613 (PRIYTIKINPEKIKDVIGKGGSIIRMLTEETGTVIEIKDDGIVKISAINGEKAKYAIKRI). The S1 motif domain occupies 623–691 (GKIYSGKVTR…RQGRIRLSMK (69 aa)).

It belongs to the polyribonucleotide nucleotidyltransferase family. Component of the RNA degradosome, which is a multiprotein complex involved in RNA processing and mRNA degradation. Mg(2+) is required as a cofactor.

The protein resides in the cytoplasm. The catalysed reaction is RNA(n+1) + phosphate = RNA(n) + a ribonucleoside 5'-diphosphate. Its function is as follows. Involved in mRNA degradation. Catalyzes the phosphorolysis of single-stranded polyribonucleotides processively in the 3'- to 5'-direction. The chain is Polyribonucleotide nucleotidyltransferase from Buchnera aphidicola subsp. Cinara cedri (strain Cc).